A 284-amino-acid chain; its full sequence is Ribosomal RNA small subunit methyltransferase A (284 aa).

Asn12, Leu14, Gly38, Glu59, Asp81, and Asn106 together coordinate S-adenosyl-L-methionine.

The protein belongs to the class I-like SAM-binding methyltransferase superfamily. rRNA adenine N(6)-methyltransferase family. RsmA subfamily.

The protein localises to the cytoplasm. The enzyme catalyses adenosine(1518)/adenosine(1519) in 16S rRNA + 4 S-adenosyl-L-methionine = N(6)-dimethyladenosine(1518)/N(6)-dimethyladenosine(1519) in 16S rRNA + 4 S-adenosyl-L-homocysteine + 4 H(+). Specifically dimethylates two adjacent adenosines (A1518 and A1519) in the loop of a conserved hairpin near the 3'-end of 16S rRNA in the 30S particle. May play a critical role in biogenesis of 30S subunits. The sequence is that of Ribosomal RNA small subunit methyltransferase A from Phytoplasma australiense.